Consider the following 173-residue polypeptide: Photosystem I assembly protein Ycf3 (173 aa).

3 TPR repeats span residues 35–68 (AYLY…EDNQ), 72–105 (GETL…NPKQ), and 120–153 (GRMA…YPGG).

It belongs to the Ycf3 family.

Its subcellular location is the cellular thylakoid membrane. Essential for the assembly of the photosystem I (PSI) complex. May act as a chaperone-like factor to guide the assembly of the PSI subunits. The sequence is that of Photosystem I assembly protein Ycf3 from Prochlorococcus marinus (strain NATL1A).